The chain runs to 1935 residues: Myosin-7 (1935 aa).

The region spanning 32–81 (DLKKDVFVPDDKEEFVKAKIISREGGKITAETEHGKTVTVKEDQVLQQNP) is the Myosin N-terminal SH3-like domain. In terms of domain architecture, Myosin motor spans 85-778 (DKIEDMAMLT…LLGLLEEMRD (694 aa)). K129 carries the N6,N6,N6-trimethyllysine modification. 178–185 (GESGAGKT) lines the ATP pocket. At T378 the chain carries Phosphothreonine. Actin-binding stretches follow at residues 655-677 (LNKLMTNLRSTHPHFVRCIIPNE) and 757-771 (RFGHTKVFFKAGLLG). The IQ domain occupies 781 to 810 (LSRIITRIQAQSRGVLARMEFKKLLERRDS). Residues 839–1935 (LLKSAETEKE…DIGTKGLNEE (1097 aa)) adopt a coiled-coil conformation. 2 positions are modified to phosphoserine: S1137 and S1269. T1282 is modified (phosphothreonine). Y1308 carries the post-translational modification Phosphotyrosine. The residue at position 1309 (T1309) is a Phosphothreonine. Position 1510 is a phosphoserine (S1510). T1513 bears the Phosphothreonine mark. The segment at 1907 to 1935 (EERADIAESQVNKLRAKSRDIGTKGLNEE) is disordered. The segment covering 1923-1935 (KSRDIGTKGLNEE) has biased composition (basic and acidic residues).

Belongs to the TRAFAC class myosin-kinesin ATPase superfamily. Myosin family. As to quaternary structure, muscle myosin is a hexameric protein that consists of 2 heavy chain subunits (MHC), 2 alkali light chain subunits (MLC) and 2 regulatory light chain subunits (MLC-2). Interacts with ECPAS. Interacts (via C-terminus) with LRRC39.

It localises to the cytoplasm. Its subcellular location is the myofibril. It is found in the sarcomere. Its function is as follows. Myosins are actin-based motor molecules with ATPase activity essential for muscle contraction. Forms regular bipolar thick filaments that, together with actin thin filaments, constitute the fundamental contractile unit of skeletal and cardiac muscle. This chain is Myosin-7 (MYH7), found in Equus caballus (Horse).